The following is a 459-amino-acid chain: Argininosuccinate lyase (459 aa).

It belongs to the lyase 1 family. Argininosuccinate lyase subfamily.

The protein localises to the cytoplasm. It catalyses the reaction 2-(N(omega)-L-arginino)succinate = fumarate + L-arginine. It functions in the pathway amino-acid biosynthesis; L-arginine biosynthesis; L-arginine from L-ornithine and carbamoyl phosphate: step 3/3. The sequence is that of Argininosuccinate lyase from Sulfurihydrogenibium sp. (strain YO3AOP1).